The primary structure comprises 206 residues: GCN5-like protein acetyltransferase Rv2170 (206 aa).

In terms of domain architecture, N-acetyltransferase spans 44 to 205 (EHIRRRGWQA…AFAILGRTLP (162 aa)). Y176 functions as the Proton donor in the catalytic mechanism.

This sequence belongs to the acetyltransferase family.

It catalyses the reaction L-lysyl-[protein] + acetyl-CoA = N(6)-acetyl-L-lysyl-[protein] + CoA + H(+). It carries out the reaction propanoyl-CoA + L-lysyl-[protein] = N(6)-propanoyl-L-lysyl-[protein] + CoA + H(+). The catalysed reaction is succinyl-CoA + L-lysyl-[protein] = N(6)-succinyl-L-lysyl-[protein] + CoA + H(+). Functionally, acetyltransferase involved in the post-translational regulation of the central metabolic enzyme isocitrate dehydrogenase 1 (ICDH-1) through lysine acetylation. Catalyzes the acetylation of ICDH-1 at Lys-30 and Lys-129, using acetyl-CoA as a donor, leading to a reduction of ICDH-1 enzyme activity. Can also use propionyl-CoA and succinyl-CoA as donors. Cannot act on the isocitrate dehydrogenase 2 (ICDH-2). Might play a role in regulating the TCA cycle and methylcitrate cycle when M.tuberculosis utilizes fatty acid as carbon source. In terms of biological role, in addition, it can acetylate the amino group of isoniazid (INH), one of the first-line drugs used for the treatment of tuberculosis, thereby canceling out the drug toxicity. Acts by catalyzing the transfer of an acetyl group from acetyl-CoA to INH. Following acetylation, INH is broken down into isonicotinic acid and acetylhydrazine. M.smegmatis and M.tuberculosis H37Ra strains overexpressing Rv2170 are resistant to INH. Has little or no acetyltransferase activity with other antibiotics such as streptomycin, neomycin, kanamycin, amikacin, apramycin and gentamicin. In Mycobacterium tuberculosis (strain ATCC 25618 / H37Rv), this protein is GCN5-like protein acetyltransferase Rv2170.